A 380-amino-acid chain; its full sequence is Cytochrome b (380 aa).

Helical transmembrane passes span 33-53, 77-98, 113-133, and 178-198; these read FGSL…FLAM, WIIR…FLHV, WNIG…GYVL, and FFTL…LHLL. Residues histidine 83 and histidine 97 each coordinate heme b. 2 residues coordinate heme b: histidine 182 and histidine 196. A ubiquinone is bound at residue histidine 201. 4 helical membrane-spanning segments follow: residues 226–246, 288–308, 320–340, and 347–367; these read TKDI…TLFS, LGGV…PILH, LSQL…WIGG, and FITI…ILMP.

This sequence belongs to the cytochrome b family. The cytochrome bc1 complex contains 11 subunits: 3 respiratory subunits (MT-CYB, CYC1 and UQCRFS1), 2 core proteins (UQCRC1 and UQCRC2) and 6 low-molecular weight proteins (UQCRH/QCR6, UQCRB/QCR7, UQCRQ/QCR8, UQCR10/QCR9, UQCR11/QCR10 and a cleavage product of UQCRFS1). This cytochrome bc1 complex then forms a dimer. The cofactor is heme b.

The protein resides in the mitochondrion inner membrane. Functionally, component of the ubiquinol-cytochrome c reductase complex (complex III or cytochrome b-c1 complex) that is part of the mitochondrial respiratory chain. The b-c1 complex mediates electron transfer from ubiquinol to cytochrome c. Contributes to the generation of a proton gradient across the mitochondrial membrane that is then used for ATP synthesis. The chain is Cytochrome b (MT-CYB) from Pan paniscus (Pygmy chimpanzee).